Reading from the N-terminus, the 601-residue chain is Glutathione-regulated potassium-efflux system protein KefB (601 aa).

13 helical membrane-spanning segments follow: residues 4–24 (ADLL…VPLA), 29–49 (IGAV…GLGF), 55–75 (EILH…GLEL), 87–107 (IFGV…GLLM), 111–131 (FLWQ…TAMA), 152–172 (VLLF…LLAG), 177–197 (HFDW…LIGG), 207–227 (FIAA…LVLS), 230–250 (LFMD…GVLL), 262–282 (AIDP…GMSL), 284–304 (LGVL…LVVI), 324–344 (MQFA…FSTA), and 356–376 (ALLL…MKGI). Residues 400-519 (KPQVIVVGFG…AGVTQFSRET (120 aa)) enclose the RCK N-terminal domain.

The protein belongs to the monovalent cation:proton antiporter 2 (CPA2) transporter (TC 2.A.37) family. KefB subfamily. In terms of assembly, interacts with the regulatory subunit KefG.

It is found in the cell inner membrane. In terms of biological role, pore-forming subunit of a potassium efflux system that confers protection against electrophiles. Catalyzes K(+)/H(+) antiport. This chain is Glutathione-regulated potassium-efflux system protein KefB, found in Salmonella paratyphi C (strain RKS4594).